A 725-amino-acid chain; its full sequence is Phosphoribosylformylglycinamidine synthase subunit PurL (725 aa).

The active site involves His41. Residues Tyr44 and Lys83 each coordinate ATP. Residue Glu85 coordinates Mg(2+). Substrate-binding positions include 86 to 89 and Arg108; that span reads SHNH. His87 (proton acceptor) is an active-site residue. Position 109 (Asp109) interacts with Mg(2+). Gln231 provides a ligand contact to substrate. A Mg(2+)-binding site is contributed by Asp259. Position 303-305 (303-305) interacts with substrate; that stretch reads ESQ. Asp485 and Gly522 together coordinate ATP. Position 523 (Asn523) interacts with Mg(2+). Residue Ser525 participates in substrate binding.

The protein belongs to the FGAMS family. In terms of assembly, monomer. Part of the FGAM synthase complex composed of 1 PurL, 1 PurQ and 2 PurS subunits.

It is found in the cytoplasm. It carries out the reaction N(2)-formyl-N(1)-(5-phospho-beta-D-ribosyl)glycinamide + L-glutamine + ATP + H2O = 2-formamido-N(1)-(5-O-phospho-beta-D-ribosyl)acetamidine + L-glutamate + ADP + phosphate + H(+). The protein operates within purine metabolism; IMP biosynthesis via de novo pathway; 5-amino-1-(5-phospho-D-ribosyl)imidazole from N(2)-formyl-N(1)-(5-phospho-D-ribosyl)glycinamide: step 1/2. Functionally, part of the phosphoribosylformylglycinamidine synthase complex involved in the purines biosynthetic pathway. Catalyzes the ATP-dependent conversion of formylglycinamide ribonucleotide (FGAR) and glutamine to yield formylglycinamidine ribonucleotide (FGAM) and glutamate. The FGAM synthase complex is composed of three subunits. PurQ produces an ammonia molecule by converting glutamine to glutamate. PurL transfers the ammonia molecule to FGAR to form FGAM in an ATP-dependent manner. PurS interacts with PurQ and PurL and is thought to assist in the transfer of the ammonia molecule from PurQ to PurL. This chain is Phosphoribosylformylglycinamidine synthase subunit PurL, found in Thermus thermophilus (strain ATCC BAA-163 / DSM 7039 / HB27).